The primary structure comprises 142 residues: Large ribosomal subunit protein uL13 (142 aa).

It belongs to the universal ribosomal protein uL13 family. In terms of assembly, part of the 50S ribosomal subunit.

In terms of biological role, this protein is one of the early assembly proteins of the 50S ribosomal subunit, although it is not seen to bind rRNA by itself. It is important during the early stages of 50S assembly. The protein is Large ribosomal subunit protein uL13 of Dechloromonas aromatica (strain RCB).